The chain runs to 202 residues: Cryptic protein (202 aa).

The first 35 residues, 1–35 (MRANSPTQGISLKMHQARPLFLVTVALQLIGLGYS), serve as a signal peptide directing secretion. N65 is a glycosylation site (N-linked (GlcNAc...) asparagine). Positions 94 to 123 (PVSRCCHNGGTCVLGSFCVCPAYFTGRYCE) constitute an EGF-like domain. 3 disulfides stabilise this stretch: C98-C105, C99-C111, and C113-C122. D166 carries the GPI-anchor amidated aspartate lipid modification. The propeptide at 167–202 (LKSFLSSGARGSRECSIPSLLLLVLCLLLQGVAGKG) is removed in mature form.

This sequence belongs to the EGF-CFC (Cripto-1/FRL1/Cryptic) family. N-glycosylated. In terms of tissue distribution, no expressed in adult tissues.

It is found in the cell membrane. The protein resides in the secreted. Functionally, nodal coreceptor involved in the correct establishment of the left-right axis. May play a role in mesoderm and/or neural patterning during gastrulation. This Mus musculus (Mouse) protein is Cryptic protein (Cfc1).